The chain runs to 389 residues: Succinate--CoA ligase [ADP-forming] subunit beta (389 aa).

The ATP-grasp domain occupies 9–236; it reads KELFASHGVP…KDAEDPLEAK (228 aa). ATP is bound by residues Lys45, 52-54, Ser94, and Glu99; that span reads GRG. Asn191 and Asp205 together coordinate Mg(2+). Residues Asn256 and 318–320 contribute to the substrate site; that span reads GIT.

This sequence belongs to the succinate/malate CoA ligase beta subunit family. Heterotetramer of two alpha and two beta subunits. Mg(2+) is required as a cofactor.

The enzyme catalyses succinate + ATP + CoA = succinyl-CoA + ADP + phosphate. It catalyses the reaction GTP + succinate + CoA = succinyl-CoA + GDP + phosphate. It functions in the pathway carbohydrate metabolism; tricarboxylic acid cycle; succinate from succinyl-CoA (ligase route): step 1/1. Functionally, succinyl-CoA synthetase functions in the citric acid cycle (TCA), coupling the hydrolysis of succinyl-CoA to the synthesis of either ATP or GTP and thus represents the only step of substrate-level phosphorylation in the TCA. The beta subunit provides nucleotide specificity of the enzyme and binds the substrate succinate, while the binding sites for coenzyme A and phosphate are found in the alpha subunit. The sequence is that of Succinate--CoA ligase [ADP-forming] subunit beta from Saccharopolyspora erythraea (strain ATCC 11635 / DSM 40517 / JCM 4748 / NBRC 13426 / NCIMB 8594 / NRRL 2338).